A 303-amino-acid chain; its full sequence is AP2-like ethylene-responsive transcription factor At1g79700 (303 aa).

A compositionally biased stretch (basic residues) spans 1-10; that stretch reads MAKVSGRSKK. The tract at residues 1–55 is disordered; that stretch reads MAKVSGRSKKTIVDDEISDKTASASESASIALTSKRKRKSPPRNAPLQRSSPYRG. Polar residues predominate over residues 20 to 32; it reads KTASASESASIAL. 2 consecutive DNA-binding regions (AP2/ERF) follow at residues 52–118 and 154–202; these read PYRG…LNFP and KYRG…TNFD. Residues 212 to 259 are disordered; that stretch reads AADKADSDSKPIRSPSREPESSDDNKSPKSEEVIEPSTSPEVIPTRRS. A compositionally biased stretch (basic and acidic residues) spans 214–243; the sequence is DKADSDSKPIRSPSREPESSDDNKSPKSEE.

It belongs to the AP2/ERF transcription factor family. AP2 subfamily.

The protein resides in the nucleus. In terms of biological role, probably acts as a transcriptional activator. Binds to the GCC-box pathogenesis-related promoter element. May be involved in the regulation of gene expression by stress factors and by components of stress signal transduction pathways. The protein is AP2-like ethylene-responsive transcription factor At1g79700 of Arabidopsis thaliana (Mouse-ear cress).